The sequence spans 373 residues: Eukaryotic translation initiation factor 3 subunit M (373 aa).

Residue Ser2 is modified to N-acetylserine. Phosphoserine is present on residues Ser2 and Ser152. Residues 180 to 338 (AASKVMVELL…RKVVVSHSTH (159 aa)) enclose the PCI domain. Lys253 carries the N6-acetyllysine modification. Ser366 is modified (phosphoserine).

Belongs to the eIF-3 subunit M family. In terms of assembly, component of the eukaryotic translation initiation factor 3 (eIF-3) complex, which is composed of 13 subunits: EIF3A, EIF3B, EIF3C, EIF3D, EIF3E, EIF3F, EIF3G, EIF3H, EIF3I, EIF3J, EIF3K, EIF3L and EIF3M. The eIF-3 complex appears to include 3 stable modules: module A is composed of EIF3A, EIF3B, EIF3G and EIF3I; module B is composed of EIF3F, EIF3H, and EIF3M; and module C is composed of EIF3C, EIF3D, EIF3E, EIF3K and EIF3L. EIF3C of module C binds EIF3B of module A and EIF3H of module B, thereby linking the three modules. EIF3J is a labile subunit that binds to the eIF-3 complex via EIF3B. The eIF-3 complex interacts with RPS6KB1 under conditions of nutrient depletion. Mitogenic stimulation leads to binding and activation of a complex composed of MTOR and RPTOR, leading to phosphorylation and release of RPS6KB1 and binding of EIF4B to eIF-3.

It localises to the cytoplasm. Component of the eukaryotic translation initiation factor 3 (eIF-3) complex, which is required for several steps in the initiation of protein synthesis. The eIF-3 complex associates with the 40S ribosome and facilitates the recruitment of eIF-1, eIF-1A, eIF-2:GTP:methionyl-tRNAi and eIF-5 to form the 43S pre-initiation complex (43S PIC). The eIF-3 complex stimulates mRNA recruitment to the 43S PIC and scanning of the mRNA for AUG recognition. The eIF-3 complex is also required for disassembly and recycling of post-termination ribosomal complexes and subsequently prevents premature joining of the 40S and 60S ribosomal subunits prior to initiation. The eIF-3 complex specifically targets and initiates translation of a subset of mRNAs involved in cell proliferation, including cell cycling, differentiation and apoptosis, and uses different modes of RNA stem-loop binding to exert either translational activation or repression. This chain is Eukaryotic translation initiation factor 3 subunit M, found in Bos taurus (Bovine).